The following is a 368-amino-acid chain: COP9 signalosome complex subunit 5 (368 aa).

Residues 56-193 (IKISAIALLK…IGAFRTYPEG (138 aa)) form the MPN domain. Positions 139, 141, and 152 each coordinate Zn(2+). Residues 139-152 (HSHPGYGCWLSGID) carry the JAMM motif motif. The interval 347-368 (TEPEKAGPSPSAPEPAVEMADA) is disordered.

This sequence belongs to the peptidase M67A family. CSN5 subfamily. As to quaternary structure, component of the CSN complex, probably composed of csn-1, csn-2, csn-3, csn-4, csn-5, csn-6 and csn-7. Within the complex it probably interacts directly with csn-1. Interacts with glh-1 and glh-3. Interacts with lag-1. Interacts with kgb-1. Requires a divalent metal cation as cofactor.

It localises to the cytoplasm. It is found in the nucleus. Probable protease subunit of the COP9 signalosome complex (CSN), a complex involved in various cellular and developmental processes. The CSN complex is an essential regulator of the ubiquitin (Ubl) conjugation pathway by mediating the deneddylation of the cullin subunits of the SCF-type E3 ligase complexes, leading to decrease the Ubl ligase activity of SCF. In the complex, it probably acts as the catalytic center that mediates the cleavage of Nedd8 from cullins. It however has no metalloprotease activity by itself and requires the other subunits of the CSN complex. The CSN complex plays an essential role in embryogenesis and oogenesis and is required to regulate microtubule stability in the early embryo. Mediates mei-3/katanin targeting for degradation at the meiosis to mitosis transition via deneddylation of cul-3. May stabilize glh-1 protein levels by antagonizing kgb-1. The sequence is that of COP9 signalosome complex subunit 5 (csn-5) from Caenorhabditis elegans.